Here is a 246-residue protein sequence, read N- to C-terminus: Uridylate kinase (246 aa).

19-22 (KISG) is an ATP binding site. Residue Gly-61 participates in UMP binding. Positions 62 and 66 each coordinate ATP. UMP is bound by residues Asp-81 and 142–149 (TGNPFFTT). The ATP site is built by Thr-169, Gln-170, Tyr-175, and Asp-178.

Belongs to the UMP kinase family. Homohexamer.

Its subcellular location is the cytoplasm. The catalysed reaction is UMP + ATP = UDP + ADP. The protein operates within pyrimidine metabolism; CTP biosynthesis via de novo pathway; UDP from UMP (UMPK route): step 1/1. Inhibited by UTP. Catalyzes the reversible phosphorylation of UMP to UDP. The polypeptide is Uridylate kinase (Wolbachia sp. subsp. Brugia malayi (strain TRS)).